An 888-amino-acid chain; its full sequence is Alanine--tRNA ligase (888 aa).

Residues H564, H568, C676, and H680 each contribute to the Zn(2+) site.

The protein belongs to the class-II aminoacyl-tRNA synthetase family. Zn(2+) is required as a cofactor.

It is found in the cytoplasm. The catalysed reaction is tRNA(Ala) + L-alanine + ATP = L-alanyl-tRNA(Ala) + AMP + diphosphate. Functionally, catalyzes the attachment of alanine to tRNA(Ala) in a two-step reaction: alanine is first activated by ATP to form Ala-AMP and then transferred to the acceptor end of tRNA(Ala). Also edits incorrectly charged Ser-tRNA(Ala) and Gly-tRNA(Ala) via its editing domain. The chain is Alanine--tRNA ligase from Bartonella quintana (strain Toulouse) (Rochalimaea quintana).